Here is a 515-residue protein sequence, read N- to C-terminus: MDEFHRCGKEDSFWQQCFLYPLFFQEDLYAISHDHYLDVSSSSRPMEHLSSNDQLSFLTVKRLIGQIRQQNHSIVLFVNCDPNPLADRKKSFYSESVLEALTLVLEVPFSIWSKYSVEGMNESKSFRSIHSIFPFLEDKFPHSNSILDARIPYSIHPEILVRTFRRWIRDAPSLHPLRSVLYEYRNSPDNLQRSIIVVPRVNTRFFLFLWNYYVCECESILFSRLKRSSHSRSLTHGSFPQRTHFHRKIKHIIIFSRRNSLKSIWSLKDPKIHYVRYGERPIIAIKGAHLLVKKCRYYLLIFRQFYFHLWSEPYRVCSHQLSKNCSSSPGYFLRVRMNPILVRTKMLDELFIADLITDEIDPIVPIVPIIGLLATEKFCDISGRPISKLSWTSLTDDDILDRFDQIWRNLFHYYSGSFDRDGLYRIKYILSLSCAKTLACKHKSTIRVVRKELGPELFKKSFSKEREFYSLRFSSKAAARSQRERIWHSDISQINPLANSWQKIQDLKIENLFDQ.

It belongs to the intron maturase 2 family. MatK subfamily.

The protein localises to the plastid. The protein resides in the chloroplast. In terms of biological role, usually encoded in the trnK tRNA gene intron. Probably assists in splicing its own and other chloroplast group II introns. This chain is Maturase K, found in Pinus patula (Mexican weeping pine).